The chain runs to 129 residues: Small ribosomal subunit protein uS11 (129 aa).

It belongs to the universal ribosomal protein uS11 family. Part of the 30S ribosomal subunit. Interacts with proteins S7 and S18. Binds to IF-3.

Functionally, located on the platform of the 30S subunit, it bridges several disparate RNA helices of the 16S rRNA. Forms part of the Shine-Dalgarno cleft in the 70S ribosome. This Agrobacterium fabrum (strain C58 / ATCC 33970) (Agrobacterium tumefaciens (strain C58)) protein is Small ribosomal subunit protein uS11.